A 71-amino-acid polypeptide reads, in one-letter code: Alpha-cobratoxin (71 aa).

Cystine bridges form between C3–C20, C14–C41, C26–C30, C45–C56, and C57–C62.

Belongs to the three-finger toxin family. Long-chain subfamily. Type II alpha-neurotoxin sub-subfamily. Monomer, homo- or heterodimer with cytotoxins 1 (P60305), 2 (AC P01445), and 3 (AC P01446); disulfide-linked. Post-translationally, in homodimer alpha-cobratoxin, selective reduction of Cys(26)-Cys(30) in one subunit does not affect the activity against the alpha-7/CHRNA7 nAChR, whereas its reduction in both subunits almost prevents alpha-7/CHRNA7 nAChR recognition. On the contrary, reduction of one or both Cys(26)-Cys(30) disulfide bonds in the homodimer considerably potentiates inhibition of the alpha-3-beta-2/CHRNA3-CHRNB2 nAChR by the toxin. As to expression, expressed by the venom gland.

The protein localises to the secreted. Monomer: binds with high affinity to muscular (alpha-1-beta-1-gamma-delta/CHRNA1-CHRNB1-CHRNG-CHRND) nAChR (tested on Torpedo californica, Kd=0.2-4.5 nM) and neuronal alpha-7/CHRNA7 nicotinic acetylcholine receptors (Kd=13-105 nM). Also inhibits GABA(A) channels. Heteropentamer targets studied are composed of alpha-1-beta-3-gamma-2 (GABRA1-GABRB3-GABRG2) subunits (IC(50)=236 nM), alpha-1-beta-2-gamma-2 (GABRA1-GABRB2-GABRG2) subunits (IC(50)=469 nM), alpha-2-beta-2-gamma-2 (GABRA2-GABRB2-GABRG2) subunits (IC(50)=485 nM), alpha-5-beta-3-gamma-2 (GABRA5-GABRB3-GABRG2) subunits (IC(50)=635 nM), and alpha-2-beta-3-gamma-2 (GABRA2-GABRB3-GABRG2) subunits (IC(50)=1099 nM) (activated by 10 uM GABA). Its function is as follows. Homodimer: binds with high affinity (but lower than the monomeric form) to muscular (IC(50)=9.7 nM) and with low affinity to neuronal alpha-7/CHRNA7 nAChRs (IC(50)=1370 nM). However, it acquires (compared to the monomeric form) the capacity to block alpha-3/beta-2 (CHRNA3/CHRNB2) nAChRs. In terms of biological role, heterodimer with cytotoxin 3 (AC P01446): is slightly more active than the homodimer in inhibiting alpha-7/CHRNA7 nAChR and is considerably more active in blocking the alpha-3-beta-2/CHRNA3-CHRNB2 nAChR. This Naja kaouthia (Monocled cobra) protein is Alpha-cobratoxin.